The chain runs to 85 residues: Large ribosomal subunit protein bL27 (85 aa).

The interval 1–22 is disordered; the sequence is MAHKKAGGSTNNGRDSESKRLG.

Belongs to the bacterial ribosomal protein bL27 family.

The chain is Large ribosomal subunit protein bL27 from Vibrio atlanticus (strain LGP32) (Vibrio splendidus (strain Mel32)).